Here is a 374-residue protein sequence, read N- to C-terminus: Translocating chain-associated membrane protein 1 (374 aa).

The Cytoplasmic portion of the chain corresponds to 1-32 (MAIRKKSNKNPPVLSHEFVLQNHADIVSCLAM). Residues 33–53 (LFLLGLMFEITAKGAIIFVAL) traverse the membrane as a helical segment. Residues 54 to 81 (QYNVTRPATEEQAAESASLYYYGIKDLA) are Lumenal-facing. Asparagine 56 carries an N-linked (GlcNAc...) asparagine glycan. The chain crosses the membrane as a helical span at residues 82–102 (TVFFYMLVAIIVHAIIQEYVL). The Cytoplasmic segment spans residues 103-121 (DKINRRMHFSKTKHSKFNE). The TLC domain occupies 117-326 (SKFNESGQLS…NFQLRRWREH (210 aa)). A helical membrane pass occupies residues 122-142 (SGQLSAFYLFACVWGTFILVS). Topologically, residues 143-159 (ENYISDPTILWRAYPHN) are lumenal. Residues 160 to 180 (LMTFQMKFFYISQLAYWLHAF) traverse the membrane as a helical segment. The Cytoplasmic portion of the chain corresponds to 181-192 (PELYFQKTKKED). The chain crosses the membrane as a helical span at residues 193-213 (IPRQLVYIGLYLFHIAGAYLL). Residue asparagine 214 is a topological domain, lumenal. Residues 215–235 (LNHLGLVLLVLHYFVEFLFHI) form a helical membrane-spanning segment. At 236–251 (SRLFYFSDEKYQKGFS) the chain is on the cytoplasmic side. The helical transmembrane segment at 252–272 (LWAVLFVLGRLLTLILSVLTV) threads the bilayer. Residues 273–297 (GFGLARAENQKLDFSTGNFNVLAVR) lie on the Lumenal side of the membrane. The chain crosses the membrane as a helical span at residues 298–318 (IAVLASICITQAFMMWKFINF). At 319–374 (QLRRWREHSAFQAPPVKRKPAVTKGRSSRKGTENGVNGTVTSNGADSPRSRKEKSS) the chain is on the cytoplasmic side. The segment at 333 to 374 (PVKRKPAVTKGRSSRKGTENGVNGTVTSNGADSPRSRKEKSS) is disordered. Basic residues predominate over residues 334–347 (VKRKPAVTKGRSSR). Residues 352-363 (NGVNGTVTSNGA) show a composition bias toward polar residues. Serine 365 bears the Phosphoserine mark.

This sequence belongs to the TRAM family. Interacts with SEC61B. May interact with Derlin-1/DERL1. Post-translationally, N-glycosylated.

Its subcellular location is the endoplasmic reticulum membrane. Functionally, involved in the translocation of nascent protein chains into or through the endoplasmic reticulum (ER) membrane by facilitating the proper chain positioning at the SEC61 channel. Regulates the exposure of nascent secretory protein chain to the cytosol during translocation into the ER. May affect the phospholipid bilayer in the vicinity of the lateral gate of the SEC61 channel, thereby facilitating ER protein transport. Intimately associates with transmembrane (TM) domain of nascent membrane proteins during the entire integration process into the ER membrane. Associates with the second TM domain of G-protein-coupled receptor opsin/OPSD nascent chain in the ER membrane, which may facilitate its integration into the membrane. Under conditions of ER stress, participates in the disposal of misfolded ER membrane proteins during the unfolded protein response (UPR), an integrated stress response (ISR) pathway, by selectively retrotranslocating misfolded ER-membrane proteins from the ER into the cytosol where they are ubiquitinated and degraded by the proteasome. The polypeptide is Translocating chain-associated membrane protein 1 (Rattus norvegicus (Rat)).